We begin with the raw amino-acid sequence, 545 residues long: CTP synthase (545 aa).

Positions 1 to 266 are amidoligase domain; that stretch reads MTTNYIFVTG…DDYICKRFSL (266 aa). A CTP-binding site is contributed by serine 14. Serine 14 is a binding site for UTP. ATP is bound by residues 15 to 20 and aspartate 72; that span reads SLGKGI. Positions 72 and 140 each coordinate Mg(2+). Residues 147 to 149, 187 to 192, and lysine 223 each bind CTP; these read DIE and KTKPTQ. Residues 187-192 and lysine 223 contribute to the UTP site; that span reads KTKPTQ. 239–241 contacts ATP; that stretch reads KDV. The 252-residue stretch at 291-542 folds into the Glutamine amidotransferase type-1 domain; it reads TIGMVGKYIE…VKAANEHQKR (252 aa). Glycine 352 provides a ligand contact to L-glutamine. The active-site Nucleophile; for glutamine hydrolysis is cysteine 379. Residues 380-383, glutamate 403, and arginine 470 each bind L-glutamine; that span reads LGMQ. Residues histidine 515 and glutamate 517 contribute to the active site.

It belongs to the CTP synthase family. In terms of assembly, homotetramer.

The catalysed reaction is UTP + L-glutamine + ATP + H2O = CTP + L-glutamate + ADP + phosphate + 2 H(+). It catalyses the reaction L-glutamine + H2O = L-glutamate + NH4(+). The enzyme catalyses UTP + NH4(+) + ATP = CTP + ADP + phosphate + 2 H(+). It participates in pyrimidine metabolism; CTP biosynthesis via de novo pathway; CTP from UDP: step 2/2. Its activity is regulated as follows. Allosterically activated by GTP, when glutamine is the substrate; GTP has no effect on the reaction when ammonia is the substrate. The allosteric effector GTP functions by stabilizing the protein conformation that binds the tetrahedral intermediate(s) formed during glutamine hydrolysis. Inhibited by the product CTP, via allosteric rather than competitive inhibition. Functionally, catalyzes the ATP-dependent amination of UTP to CTP with either L-glutamine or ammonia as the source of nitrogen. Regulates intracellular CTP levels through interactions with the four ribonucleotide triphosphates. The protein is CTP synthase of Salmonella paratyphi A (strain ATCC 9150 / SARB42).